Consider the following 225-residue polypeptide: Zinc finger protein 22 (225 aa).

A disordered region spans residues 1 to 35 (MRLGKPKGGISRSSSQGKVYENQRKTGRQRQRWGM). Lys-18 carries the post-translational modification N6-acetyllysine. 5 consecutive C2H2-type zinc fingers follow at residues 55 to 77 (YKCV…QKIH), 83 to 105 (HKCA…RRVH), 111 to 133 (YRCD…QRIH), 139 to 161 (YQCD…QRTH), and 167 to 189 (YQCS…TKVH). Residues 183–225 (RQHTKVHEEEKPRKTRGRSLRAKTHSLSSWKAGKGRRSAAGLR) are disordered. Basic residues predominate over residues 195–206 (RKTRGRSLRAKT).

Belongs to the krueppel C2H2-type zinc-finger protein family.

The protein resides in the nucleus. Binds DNA through the consensus sequence 5'-CAATG-3'. May be involved in transcriptional regulation and may play a role in tooth formation. The chain is Zinc finger protein 22 (ZNF22) from Bos taurus (Bovine).